The following is a 253-amino-acid chain: Imidazole glycerol phosphate synthase subunit HisF (253 aa).

Residues Asp11 and Asp130 contribute to the active site.

It belongs to the HisA/HisF family. As to quaternary structure, heterodimer of HisH and HisF.

The protein resides in the cytoplasm. It catalyses the reaction 5-[(5-phospho-1-deoxy-D-ribulos-1-ylimino)methylamino]-1-(5-phospho-beta-D-ribosyl)imidazole-4-carboxamide + L-glutamine = D-erythro-1-(imidazol-4-yl)glycerol 3-phosphate + 5-amino-1-(5-phospho-beta-D-ribosyl)imidazole-4-carboxamide + L-glutamate + H(+). The protein operates within amino-acid biosynthesis; L-histidine biosynthesis; L-histidine from 5-phospho-alpha-D-ribose 1-diphosphate: step 5/9. In terms of biological role, IGPS catalyzes the conversion of PRFAR and glutamine to IGP, AICAR and glutamate. The HisF subunit catalyzes the cyclization activity that produces IGP and AICAR from PRFAR using the ammonia provided by the HisH subunit. The sequence is that of Imidazole glycerol phosphate synthase subunit HisF from Clostridium botulinum (strain Okra / Type B1).